The primary structure comprises 294 residues: Glyceraldehyde-3-phosphate dehydrogenase (294 aa).

Positions 19, 63, and 105 each coordinate NAD(+). Residues 134-136, Thr-165, 194-195, and Arg-217 contribute to the D-glyceraldehyde 3-phosphate site; these read SCT and TG. The active-site Nucleophile is Cys-135.

Belongs to the glyceraldehyde-3-phosphate dehydrogenase family. As to quaternary structure, homotetramer.

The protein localises to the cytoplasm. It carries out the reaction D-glyceraldehyde 3-phosphate + phosphate + NAD(+) = (2R)-3-phospho-glyceroyl phosphate + NADH + H(+). It participates in carbohydrate degradation; glycolysis; pyruvate from D-glyceraldehyde 3-phosphate: step 1/5. In terms of biological role, catalyzes the oxidative phosphorylation of glyceraldehyde 3-phosphate (G3P) to 1,3-bisphosphoglycerate (BPG) using the cofactor NAD. The first reaction step involves the formation of a hemiacetal intermediate between G3P and a cysteine residue, and this hemiacetal intermediate is then oxidized to a thioester, with concomitant reduction of NAD to NADH. The reduced NADH is then exchanged with the second NAD, and the thioester is attacked by a nucleophilic inorganic phosphate to produce BPG. The sequence is that of Glyceraldehyde-3-phosphate dehydrogenase (gap) from Serratia odorifera.